A 601-amino-acid polypeptide reads, in one-letter code: Sodium-dependent phosphate transport protein 2C (601 aa).

Residues 1 to 75 lie on the Cytoplasmic side of the membrane; it reads MPNSLAGGQV…RRVVSSFLKA (75 aa). Position 4 is a phosphoserine (S4). The chain crosses the membrane as a helical span at residues 76 to 96; the sequence is CGLLGSLYFFICSLDILSSAF. Over 97-110 the chain is Extracellular; that stretch reads QLLGSKMAGDIFKD. The helical transmembrane segment at 111 to 131 threads the bilayer; that stretch reads NVVLSNPVAGLVIGVLVTVLV. At 132-187 the chain is on the cytoplasmic side; it reads QSSSTSSSIVVSMVASKLLTVQVSVPIIMGVNVGTSITSTLVSMAQSGDRDEFQRA. A helical transmembrane segment spans residues 188-208; that stretch reads FSGSAVHGIFNWLTVLVLLPL. The Extracellular segment spans residues 209-324; that stretch reads ESATAALERL…FAGSKLTDLA (116 aa). Residues N264, N267, and N299 are each glycosylated (N-linked (GlcNAc...) asparagine). A disulfide bridge connects residues C275 and C311. A helical transmembrane segment spans residues 325-345; it reads VGFILLAGSLLVLCVCLVLIV. The Cytoplasmic segment spans residues 346 to 369; that stretch reads KLLNSVLKGRIAQAVKTVINADFP. A helical membrane pass occupies residues 370–390; it reads FPFGWLSGYLAILVGAGLTFL. The Extracellular portion of the chain corresponds to 391–441; it reads LQSSSVFTAAIVPLMGVGVIDLERAYPLFLGSNIGTTTTALLAALASPADM. Residues 442–462 form a helical membrane-spanning segment; sequence LIFAVQVALIHFFFNLAGILL. Topologically, residues 463–487 are cytoplasmic; sequence WYLVPVLRLPIPLAKRFGNLTAQYR. The chain crosses the membrane as a helical span at residues 488–508; sequence WVAIVYLLLTFLLLPLAAFGL. Over 509-512 the chain is Extracellular; that stretch reads SLAG. A helical membrane pass occupies residues 513 to 533; the sequence is GTVLAAVGGPLVGLVLLIILV. The Cytoplasmic segment spans residues 534–601; the sequence is NVLQQHRPSW…NPQVIASQQL (68 aa).

The protein belongs to the SLC34A transporter family. As to expression, expressed only in the kidney.

Its subcellular location is the apical cell membrane. It carries out the reaction 2 Na(+)(out) + phosphate(out) = 2 Na(+)(in) + phosphate(in). Involved in actively transporting phosphate into cells via Na(+) cotransport in the renal brush border membrane. The cotransport has a Na(+):Pi stoichiometry of 2:1 and is electroneutral. This chain is Sodium-dependent phosphate transport protein 2C (Slc34a3), found in Mus musculus (Mouse).